The chain runs to 363 residues: Cell division cycle-associated protein 3 (363 aa).

Over residues 1–12 (MGSAESKAQVTP) the composition is skewed to polar residues. 4 disordered regions span residues 1–81 (MGSA…TPLR), 126–152 (VESQ…KAET), 191–210 (MNDQ…EESP), and 231–363 (ENLN…HSNS). Residues 93-152 (KQLSEVFVAEDSSTEGGPLGFTGPEATNLERQVVESQTAPPAGEHVNDHEVEPSVEKAET) form an F-box-like region. A compositionally biased stretch (basic and acidic residues) spans 137–152 (HVNDHEVEPSVEKAET). The span at 192–210 (NDQEESPIAETMNDQEESP) shows a compositional bias: acidic residues. A compositionally biased stretch (polar residues) spans 259 to 285 (SVVSTESTQATGQQQKTRGKSPRSSGV). Low complexity predominate over residues 296–308 (LLSSSSGRSPLRI). Residues 311–321 (EDNSPNTNTQH) show a composition bias toward polar residues. The KEN box motif lies at 353–355 (KEN).

As to quaternary structure, interacts with wee1, when wee1 is phosphorylated at 'Ser-38'. Post-translationally, phosphorylated. Ubiquitinated and degraded by the APC/C-Cdh1 complex during G1 phase.

The protein resides in the cytoplasm. It is found in the cytosol. The protein operates within protein modification; protein ubiquitination. F-box-like protein which is required for entry into mitosis. Acts by participating in E3 ligase complexes that mediate the ubiquitination and degradation of WEE1 kinase at G2/M phase. This Xenopus laevis (African clawed frog) protein is Cell division cycle-associated protein 3 (cdca3).